The following is a 127-amino-acid chain: uncharacterized protein (127 aa).

Residues 1–127 (MKIVVTSIFV…CGNLIQIVQK (127 aa)) form the VOC domain.

The protein belongs to the glyoxalase I family.

This is an uncharacterized protein from Bacillus subtilis (strain 168).